We begin with the raw amino-acid sequence, 64 residues long: Protein DsrB (64 aa).

Belongs to the DsrB family.

The sequence is that of Protein DsrB from Salmonella arizonae (strain ATCC BAA-731 / CDC346-86 / RSK2980).